Reading from the N-terminus, the 158-residue chain is C-type lectin galactose-binding isoform (158 aa).

The signal sequence occupies residues 1–20; sequence MGRFLLVTLSLLVVAFSLNG. Cystine bridges form between Cys-26-Cys-37, Cys-54-Cys-154, and Cys-129-Cys-146. Residues 33 to 155 form the C-type lectin domain; the sequence is KNGYCYKVFK…CTALRPFLCQ (123 aa). Gln-119, Asp-121, Glu-127, Asn-142, and Asp-143 together coordinate Ca(2+). Residues 119-121 carry the Galactose-binding motif; that stretch reads QPD.

It belongs to the true venom lectin family. Homodimer; disulfide-linked. As to expression, expressed by the venom gland.

It is found in the secreted. Its function is as follows. Galactose-binding lectin that binds to and agglutinates erythrocytes in a calcium-dependent manner. This is C-type lectin galactose-binding isoform from Hoplocephalus stephensii (Stephens's banded snake).